The primary structure comprises 763 residues: Xaa-Pro dipeptidyl-peptidase (763 aa).

Active-site charge relay system residues include Ser348, Asp468, and His498.

The protein belongs to the peptidase S15 family. Homodimer.

The protein resides in the cytoplasm. The enzyme catalyses Hydrolyzes Xaa-Pro-|- bonds to release unblocked, N-terminal dipeptides from substrates including Ala-Pro-|-p-nitroanilide and (sequentially) Tyr-Pro-|-Phe-Pro-|-Gly-Pro-|-Ile.. Removes N-terminal dipeptides sequentially from polypeptides having unsubstituted N-termini provided that the penultimate residue is proline. The sequence is that of Xaa-Pro dipeptidyl-peptidase from Lactococcus lactis subsp. cremoris (strain SK11).